A 712-amino-acid chain; its full sequence is Glycine--tRNA ligase beta subunit (712 aa).

The protein belongs to the class-II aminoacyl-tRNA synthetase family. In terms of assembly, tetramer of two alpha and two beta subunits.

The protein resides in the cytoplasm. It carries out the reaction tRNA(Gly) + glycine + ATP = glycyl-tRNA(Gly) + AMP + diphosphate. This Acaryochloris marina (strain MBIC 11017) protein is Glycine--tRNA ligase beta subunit.